We begin with the raw amino-acid sequence, 657 residues long: tRNA uridine 5-carboxymethylaminomethyl modification enzyme MnmG (657 aa).

13-18 (GGGHAG) serves as a coordination point for FAD. Residue 281–295 (GPRYCPSVEDKINRF) coordinates NAD(+).

The protein belongs to the MnmG family. As to quaternary structure, homodimer. Heterotetramer of two MnmE and two MnmG subunits. Requires FAD as cofactor.

The protein localises to the cytoplasm. Its function is as follows. NAD-binding protein involved in the addition of a carboxymethylaminomethyl (cmnm) group at the wobble position (U34) of certain tRNAs, forming tRNA-cmnm(5)s(2)U34. This is tRNA uridine 5-carboxymethylaminomethyl modification enzyme MnmG from Acidovorax ebreus (strain TPSY) (Diaphorobacter sp. (strain TPSY)).